The primary structure comprises 214 residues: MEAYKSEFIQFALSRQVLKFGEFTLKSGRISPYFFNAGLFNTGADLARLGEFYAKAIQASGVEYDVIFGPAYKGLPIATTVSVALFNHFQIDKPVCFNRKEAKDHGEGGQLIGYGLSGKILLVDDVITAGTAIRESMTLIAQNQAELSAVMIALNRQEKGKGELSAIQEVERDYQCQVLSIVNFDDLMTFIEQAPEYQQYLPAMRAYREQYGVK.

Residue Lys-26 coordinates 5-phospho-alpha-D-ribose 1-diphosphate. 34 to 35 (FF) lines the orotate pocket. Residues 72-73 (YK), Arg-99, Lys-100, Lys-103, His-105, and 124-132 (DDVITAGTA) each bind 5-phospho-alpha-D-ribose 1-diphosphate. Orotate contacts are provided by Thr-128 and Arg-156.

The protein belongs to the purine/pyrimidine phosphoribosyltransferase family. PyrE subfamily. As to quaternary structure, homodimer. It depends on Mg(2+) as a cofactor.

The enzyme catalyses orotidine 5'-phosphate + diphosphate = orotate + 5-phospho-alpha-D-ribose 1-diphosphate. The protein operates within pyrimidine metabolism; UMP biosynthesis via de novo pathway; UMP from orotate: step 1/2. Catalyzes the transfer of a ribosyl phosphate group from 5-phosphoribose 1-diphosphate to orotate, leading to the formation of orotidine monophosphate (OMP). The protein is Orotate phosphoribosyltransferase of Pasteurella multocida (strain Pm70).